We begin with the raw amino-acid sequence, 168 residues long: Protein C2-DOMAIN ABA-RELATED 3 (168 aa).

In terms of domain architecture, C2 spans 1 to 106 (MSLMDNLLGI…IEALRMELSG (106 aa)). Ca(2+) contacts are provided by arginine 24, aspartate 25, aspartate 30, aspartate 76, histidine 77, aspartate 78, and aspartate 84.

The protein belongs to the plant CAR protein family. As to quaternary structure, binds to PYR/PYL/RCAR abscisic acid intracellular receptors in an ABA-independent manner, both at the plasma membrane and in the nucleus. Ca(2+) serves as cofactor.

Its subcellular location is the cell membrane. It is found in the nucleus. Functionally, stimulates the GTPase/ATPase activities of Obg-like ATPases. Mediates the transient calcium-dependent interaction of PYR/PYL/RCAR abscisic acid (ABA) receptors with the plasma membrane and thus regulates ABA sensitivity. The sequence is that of Protein C2-DOMAIN ABA-RELATED 3 from Arabidopsis thaliana (Mouse-ear cress).